The sequence spans 251 residues: Adapter protein MecA (251 aa).

This sequence belongs to the MecA family. As to quaternary structure, homodimer.

Functionally, enables the recognition and targeting of unfolded and aggregated proteins to the ClpC protease or to other proteins involved in proteolysis. In Streptococcus agalactiae serotype Ia (strain ATCC 27591 / A909 / CDC SS700), this protein is Adapter protein MecA.